We begin with the raw amino-acid sequence, 111 residues long: uncharacterized protein (111 aa).

The helical transmembrane segment at 60-80 (TFGRFLAHISCLICILSKRIF) threads the bilayer.

The protein resides in the mitochondrion membrane. This is an uncharacterized protein from Arabidopsis thaliana (Mouse-ear cress).